Consider the following 434-residue polypeptide: Serine--tRNA ligase (434 aa).

Residue 239–241 coordinates L-serine; that stretch reads TAE. 270 to 272 provides a ligand contact to ATP; it reads RSE. Glu-293 contacts L-serine. Position 357 to 360 (357 to 360) interacts with ATP; that stretch reads EISS. An L-serine-binding site is contributed by Ser-393.

The protein belongs to the class-II aminoacyl-tRNA synthetase family. Type-1 seryl-tRNA synthetase subfamily. Homodimer. The tRNA molecule binds across the dimer.

Its subcellular location is the cytoplasm. It catalyses the reaction tRNA(Ser) + L-serine + ATP = L-seryl-tRNA(Ser) + AMP + diphosphate + H(+). The enzyme catalyses tRNA(Sec) + L-serine + ATP = L-seryl-tRNA(Sec) + AMP + diphosphate + H(+). Its pathway is aminoacyl-tRNA biosynthesis; selenocysteinyl-tRNA(Sec) biosynthesis; L-seryl-tRNA(Sec) from L-serine and tRNA(Sec): step 1/1. Its function is as follows. Catalyzes the attachment of serine to tRNA(Ser). Is also able to aminoacylate tRNA(Sec) with serine, to form the misacylated tRNA L-seryl-tRNA(Sec), which will be further converted into selenocysteinyl-tRNA(Sec). This Pseudoalteromonas translucida (strain TAC 125) protein is Serine--tRNA ligase.